The following is a 337-amino-acid chain: Fructose-1,6-bisphosphatase class 1 (337 aa).

Residues Glu-92, Asp-114, Leu-116, and Asp-117 each coordinate Mg(2+). Substrate contacts are provided by residues 117 to 120 (DGSS), Asn-209, and Lys-275. Residue Glu-281 participates in Mg(2+) binding.

This sequence belongs to the FBPase class 1 family. In terms of assembly, homotetramer. The cofactor is Mg(2+).

It localises to the cytoplasm. It catalyses the reaction beta-D-fructose 1,6-bisphosphate + H2O = beta-D-fructose 6-phosphate + phosphate. Its pathway is carbohydrate biosynthesis; gluconeogenesis. This is Fructose-1,6-bisphosphatase class 1 from Thiobacillus denitrificans (strain ATCC 25259 / T1).